The primary structure comprises 380 residues: N-acetylcysteine deacetylase (380 aa).

Positions 98, 100, 134, 158, and 350 each coordinate Ni(2+).

The protein belongs to the peptidase M20 family. A divalent metal cation is required as a cofactor.

The enzyme catalyses N-acetyl-L-cysteine + H2O = L-cysteine + acetate. It participates in amino-acid biosynthesis; L-cysteine biosynthesis. In terms of biological role, probably catalyzes the deacetylation of N-acetylcysteine (NAC) to acetate and cysteine. Is involved in a S-(2-succino)cysteine (2SC) degradation pathway that allows B.subtilis to grow on 2SC as a sole sulfur source, via its metabolization to cysteine. In Bacillus subtilis (strain 168), this protein is N-acetylcysteine deacetylase.